We begin with the raw amino-acid sequence, 382 residues long: MKALHFGAGNIGRGFIGKLLADAGVGLTFADVNQTVLDALNARHSYQVRVVGEQEQIDTVSGVDAVNSTSEDVVTLIATVDLVTTAVGPVVLERIAPAIAKGLVLRKAQGNERPLNIIACENMVRGTSQLKTHVFNALEEGDKAWVESHIGFVDSAVDRIVPPSASAAHDPLEVTVETFSEWIVDKTQFKGELPTIAGMELTDNLMAFVERKLFTLNTGHAITAYLGKQAGHQTIRDAILDEKIRLVVRGAMEESGAVLIKRYGFDDAKHAAYIEKILSRFENPYLKDDVERVGRQPLRKLSAGDRLIKPLLGTLEYGLPHQNLVLGIAAAMHFRSEDDPQAQELAQLIADKGPQAALAQISGLDANSDVVASAVNAYNATA.

Position 3-14 (3-14 (ALHFGAGNIGRG)) interacts with NAD(+).

Belongs to the mannitol dehydrogenase family.

It catalyses the reaction D-mannitol 1-phosphate + NAD(+) = beta-D-fructose 6-phosphate + NADH + H(+). This Cronobacter sakazakii (strain ATCC BAA-894) (Enterobacter sakazakii) protein is Mannitol-1-phosphate 5-dehydrogenase.